The primary structure comprises 390 residues: Pyruvate dehydrogenase E1 component subunit alpha, somatic form, mitochondrial (390 aa).

The N-terminal 29 residues, 1–29, are a transit peptide targeting the mitochondrion; it reads MRKMLAAVSRVLSGASQKPASRVLVASRN. Lysine 63 carries the post-translational modification N6-acetyllysine; alternate. Position 63 is an N6-succinyllysine; alternate (lysine 63). Positions 92, 118, 119, 157, 165, 167, 196, 197, 198, 225, and 227 each coordinate pyruvate. Thiamine diphosphate is bound by residues tyrosine 118 and arginine 119. Glycine 165, valine 167, aspartate 196, glycine 197, alanine 198, and asparagine 225 together coordinate thiamine diphosphate. Aspartate 196 contributes to the Mg(2+) binding site. Residues asparagine 225 and tyrosine 227 each contribute to the Mg(2+) site. Serine 232 carries the phosphoserine; by PDK1 modification. N6-acetyllysine; alternate is present on lysine 244. An N6-succinyllysine; alternate modification is found at lysine 244. Lysine 277 bears the N6-succinyllysine mark. Thiamine diphosphate is bound at residue histidine 292. Serine 293 carries the post-translational modification Phosphoserine; by PDK1, PDK2, PDK3 and PDK4. Serine 295 carries the post-translational modification Phosphoserine. The residue at position 300 (serine 300) is a Phosphoserine; by PDK1, PDK2, PDK3 and PDK4. The residue at position 301 (tyrosine 301) is a Phosphotyrosine. N6-acetyllysine; alternate is present on lysine 313. An N6-succinyllysine; alternate modification is found at lysine 313. Lysine 321 and lysine 336 each carry N6-acetyllysine. Lysine 385 is modified (N6-succinyllysine).

Heterotetramer of two PDHA1 and two PDHB subunits. The heterotetramer interacts with DLAT, and is part of the multimeric pyruvate dehydrogenase complex that contains multiple copies of pyruvate dehydrogenase (E1), dihydrolipoamide acetyltransferase (DLAT, E2) and lipoamide dehydrogenase (DLD, E3). These subunits are bound to an inner core composed of about 48 DLAT and 12 PDHX molecules. The cofactor is thiamine diphosphate. Mg(2+) serves as cofactor. Phosphorylation at Ser-232, Ser-293 and Ser-300 by PDK family kinases inactivates the enzyme; for this phosphorylation at a single site is sufficient. Phosphorylation at Ser-293 interferes with access to active site, and thereby inactivates the enzyme. Dephosphorylation at all three sites, i.e. at Ser-232, Ser-293 and Ser-300, is required for reactivation. Post-translationally, acetylation alters the phosphorylation pattern. Deacetylated by SIRT3.

It is found in the mitochondrion matrix. It catalyses the reaction N(6)-[(R)-lipoyl]-L-lysyl-[protein] + pyruvate + H(+) = N(6)-[(R)-S(8)-acetyldihydrolipoyl]-L-lysyl-[protein] + CO2. Its activity is regulated as follows. Pyruvate dehydrogenase activity is inhibited by phosphorylation of PDHA1; it is reactivated by dephosphorylation. Functionally, the pyruvate dehydrogenase complex catalyzes the overall conversion of pyruvate to acetyl-CoA and CO(2), and thereby links the glycolytic pathway to the tricarboxylic cycle. This Pan troglodytes (Chimpanzee) protein is Pyruvate dehydrogenase E1 component subunit alpha, somatic form, mitochondrial (PDHA1).